The sequence spans 409 residues: Calsequestrin-2 (409 aa).

An N-terminal signal peptide occupies residues 1 to 19; the sequence is MKRAHLFVVGVYLLSSCRA. Phosphotyrosine is present on Y282. N-linked (GlcNAc...) asparagine glycosylation is present at N335. Residues 364–409 form a disordered region; it reads DVLSGKINTEDDDNEDEDDDDDNDDDDDDNGNSDEEDNDDSDEDDE. A compositionally biased stretch (acidic residues) spans 373 to 409; sequence EDDDNEDEDDDDDNDDDDDDNGNSDEEDNDDSDEDDE.

It belongs to the calsequestrin family. As to quaternary structure, monomer, homodimer and homooligomer. Mostly monomeric in the absence of calcium. Forms higher oligomers in a calcium-dependent manner. Dimers associate to form tetramers, that then form linear homomer chains. Interacts with ASPH and TRDN. Phosphorylation in the C-terminus, probably by CK2, moderately increases calcium buffering capacity. In terms of processing, N-glycosylated. As to expression, detected in heart muscle (at protein level).

It localises to the sarcoplasmic reticulum lumen. Calsequestrin is a high-capacity, moderate affinity, calcium-binding protein and thus acts as an internal calcium store in muscle. Calcium ions are bound by clusters of acidic residues at the protein surface, especially at the interface between subunits. Can bind around 60 Ca(2+) ions. Regulates the release of lumenal Ca(2+) via the calcium release channel RYR2; this plays an important role in triggering muscle contraction. Plays a role in excitation-contraction coupling in the heart and in regulating the rate of heart beats. This chain is Calsequestrin-2 (CASQ2), found in Oryctolagus cuniculus (Rabbit).